The following is a 379-amino-acid chain: C-C chemokine receptor type 7 (379 aa).

The signal sequence occupies residues 1–24 (MDLGKPMKNVLVVALLVIFQVCLC). Residues 25–59 (QDEVTDNYIGDNTTVDYTLYESVCFKKDVRNFKAW) lie on the Extracellular side of the membrane. Asparagine 36 is a glycosylation site (N-linked (GlcNAc...) asparagine). Residues 60–86 (FLPIMYSIICFVGLLGNGLVMLTYIYF) traverse the membrane as a helical segment. The Cytoplasmic segment spans residues 87–95 (KRLKTMTDT). The chain crosses the membrane as a helical span at residues 96–116 (YLLNLALADILFLLTLPFWAY). At 117 to 130 (SAAKSWVFGVHVCK) the chain is on the extracellular side. Cysteine 129 and cysteine 210 form a disulfide bridge. The chain crosses the membrane as a helical span at residues 131 to 152 (LIFGIYKISFFSGMLLLLCISI). Topologically, residues 153-170 (DRYVAIVQAVSAHRHRAR) are cytoplasmic. A helical transmembrane segment spans residues 171–191 (VLLISKLSCLGIWMLAIVLST). Topologically, residues 192–219 (PEVMYSGIQKSSSEQALRCSLVTEHVEA) are extracellular. Residues 220–247 (LITIQVAQMVVGFLIPLMAMSFCYLVII) form a helical membrane-spanning segment. Over 248 to 263 (RTLLQARNFERNKAIK) the chain is Cytoplasmic. Residues 264-289 (VIIAVVVVFVAFQLPYNGVVLAHTVA) traverse the membrane as a helical segment. At 290–314 (NFNITSGTSCELSKQLNIAYDVTYS) the chain is on the extracellular side. N-linked (GlcNAc...) asparagine glycosylation is present at asparagine 292. The chain crosses the membrane as a helical span at residues 315 to 332 (LACVRCCVNPFLYAFIGV). Topologically, residues 333–379 (KFRSDLFKLFKDLGCLSQEQLRQWSFCRHTRRSSMSVEAETTTTFSP) are cytoplasmic.

Belongs to the G-protein coupled receptor 1 family.

Its subcellular location is the cell membrane. In terms of biological role, receptor for the MIP-3-beta chemokine. The chain is C-C chemokine receptor type 7 (CCR7) from Bos taurus (Bovine).